A 244-amino-acid polypeptide reads, in one-letter code: Sugar fermentation stimulation protein homolog (244 aa).

Belongs to the SfsA family.

This is Sugar fermentation stimulation protein homolog from Dinoroseobacter shibae (strain DSM 16493 / NCIMB 14021 / DFL 12).